The sequence spans 383 residues: Acetyl-CoA acetyltransferase (383 aa).

Cys-85 acts as the Acyl-thioester intermediate in catalysis. Positions 206, 207, 209, and 328 each coordinate CoA. His-332 functions as the Proton acceptor in the catalytic mechanism.

Belongs to the thiolase-like superfamily. Thiolase family. As to quaternary structure, interacts with HMG-CoA synthase (HMGCS) that catalyzes the second step in the pathway and with a DUF35 protein. The acetoacetyl-CoA thiolase/HMG-CoA synthase complex channels the intermediate via a fused CoA-binding site, which allows for efficient coupling of the endergonic thiolase reaction with the exergonic HMGCS reaction.

The catalysed reaction is 2 acetyl-CoA = acetoacetyl-CoA + CoA. It functions in the pathway metabolic intermediate biosynthesis; (R)-mevalonate biosynthesis; (R)-mevalonate from acetyl-CoA: step 1/3. Catalyzes the condensation of two acetyl-coA molecules into acetoacetyl-CoA. Functions in the mevalonate (MVA) pathway leading to isopentenyl diphosphate (IPP), a key precursor for the biosynthesis of isoprenoid compounds that are building blocks of archaeal membrane lipids. This Methanothermobacter thermautotrophicus (strain ATCC 29096 / DSM 1053 / JCM 10044 / NBRC 100330 / Delta H) (Methanobacterium thermoautotrophicum) protein is Acetyl-CoA acetyltransferase.